The sequence spans 32 residues: Calcitonin (32 aa).

A disulfide bond links Cys-1 and Cys-7. Pro-32 carries the post-translational modification Proline amide.

It belongs to the calcitonin family.

It is found in the secreted. Its function is as follows. Causes a rapid but short-lived drop in the level of calcium and phosphate in blood by promoting the incorporation of those ions in the bones. In Anguilla japonica (Japanese eel), this protein is Calcitonin.